The primary structure comprises 182 residues: Adenine phosphoribosyltransferase (182 aa).

This sequence belongs to the purine/pyrimidine phosphoribosyltransferase family. In terms of assembly, homodimer.

It localises to the cytoplasm. It carries out the reaction AMP + diphosphate = 5-phospho-alpha-D-ribose 1-diphosphate + adenine. It functions in the pathway purine metabolism; AMP biosynthesis via salvage pathway; AMP from adenine: step 1/1. Catalyzes a salvage reaction resulting in the formation of AMP, that is energically less costly than de novo synthesis. The sequence is that of Adenine phosphoribosyltransferase from Campylobacter fetus subsp. fetus (strain 82-40).